The sequence spans 430 residues: 4-hydroxy-3-methylbut-2-en-1-yl diphosphate synthase (flavodoxin) (430 aa).

[4Fe-4S] cluster contacts are provided by cysteine 310, cysteine 313, cysteine 356, and glutamate 363.

It belongs to the IspG family. It depends on [4Fe-4S] cluster as a cofactor.

The enzyme catalyses (2E)-4-hydroxy-3-methylbut-2-enyl diphosphate + oxidized [flavodoxin] + H2O + 2 H(+) = 2-C-methyl-D-erythritol 2,4-cyclic diphosphate + reduced [flavodoxin]. Its pathway is isoprenoid biosynthesis; isopentenyl diphosphate biosynthesis via DXP pathway; isopentenyl diphosphate from 1-deoxy-D-xylulose 5-phosphate: step 5/6. Functionally, converts 2C-methyl-D-erythritol 2,4-cyclodiphosphate (ME-2,4cPP) into 1-hydroxy-2-methyl-2-(E)-butenyl 4-diphosphate. The protein is 4-hydroxy-3-methylbut-2-en-1-yl diphosphate synthase (flavodoxin) of Nitrobacter winogradskyi (strain ATCC 25391 / DSM 10237 / CIP 104748 / NCIMB 11846 / Nb-255).